The following is a 239-amino-acid chain: MKNDVISPEFDENGRPLRRIRSFVRRQGRLTKGQEHALENYWPVMGVEFSEDMLDFPALFGREAPVTLEIGFGMGASLVAMAKDRPEQDFLGIEVHSPGVGACLASAHEEGLNNLRVMCHDAVEVLHKMIPDNSLRMVQLFFPDPWHKARHNKRRIVQVPFAELVKSKLQLGGVFHMATDWEPYAEHMLEVMSSIDGYKNLSESNDYVPRPASRPVTKFEQRGHRLGHGVWDLMFERVK.

4 residues coordinate S-adenosyl-L-methionine: glutamate 69, glutamate 94, aspartate 121, and aspartate 144. The active site involves aspartate 144. Position 148 (lysine 148) interacts with substrate. The segment at 150 to 155 (RHNKRR) is interaction with RNA. Residues aspartate 180 and 217 to 220 (TKFE) contribute to the substrate site.

This sequence belongs to the class I-like SAM-binding methyltransferase superfamily. TrmB family. In terms of assembly, monomer.

It carries out the reaction guanosine(46) in tRNA + S-adenosyl-L-methionine = N(7)-methylguanosine(46) in tRNA + S-adenosyl-L-homocysteine. The protein operates within tRNA modification; N(7)-methylguanine-tRNA biosynthesis. Its function is as follows. Catalyzes the formation of N(7)-methylguanine at position 46 (m7G46) in tRNA. This chain is tRNA (guanine-N(7)-)-methyltransferase, found in Shigella boydii serotype 4 (strain Sb227).